The chain runs to 143 residues: Large ribosomal subunit protein uL11 (143 aa).

It belongs to the universal ribosomal protein uL11 family. In terms of assembly, part of the ribosomal stalk of the 50S ribosomal subunit. Interacts with L10 and the large rRNA to form the base of the stalk. L10 forms an elongated spine to which L12 dimers bind in a sequential fashion forming a multimeric L10(L12)X complex. In terms of processing, one or more lysine residues are methylated.

In terms of biological role, forms part of the ribosomal stalk which helps the ribosome interact with GTP-bound translation factors. The sequence is that of Large ribosomal subunit protein uL11 from Saccharophagus degradans (strain 2-40 / ATCC 43961 / DSM 17024).